The chain runs to 141 residues: MTIILGADAHGNDLKEAIKGFLQQEGFDVTDVTAIADDFVDNTLAVARALKADEESLGIMIDAYGAGPFMVATKIKGMVAAEVSDERSAYMTRGHNNARMITMGAEIVGQELAKNIAKGFVTGHYDGGRHQIRVDMLNKMA.

This sequence belongs to the LacAB/RpiB family. As to quaternary structure, heteromultimeric protein consisting of LacA and LacB.

The enzyme catalyses aldehydo-D-galactose 6-phosphate = keto-D-tagatose 6-phosphate. Its pathway is carbohydrate metabolism; D-galactose 6-phosphate degradation; D-tagatose 6-phosphate from D-galactose 6-phosphate: step 1/1. This is Galactose-6-phosphate isomerase subunit LacA from Streptococcus equi subsp. equi (strain 4047).